The primary structure comprises 461 residues: Ig heavy chain C region, membrane-bound form (461 aa).

Residues 1 to 99 (ATPSPPTLYG…GESVWIKEIP (99 aa)) are CH1. Residues 100–205 (DCKGDKVHPT…TQSRNITGSQ (106 aa)) are CH2. N-linked (GlcNAc...) asparagine glycans are attached at residues Asn-164, Asn-200, Asn-245, Asn-275, Asn-374, Asn-411, Asn-415, and Asn-437. Positions 206 to 308 (VPCSCNDPVI…PLRASIHKEE (103 aa)) are CH3. The segment at 309 to 418 (VKDLREPSVS…IINRTVNKSS (110 aa)) is CH4. The helical transmembrane segment at 438-458 (ASTFIILFFLSIFYRAAVTLV) threads the bilayer.

It is found in the cell membrane. This chain is Ig heavy chain C region, membrane-bound form, found in Heterodontus francisci (Horn shark).